Here is a 781-residue protein sequence, read N- to C-terminus: AP-3 complex subunit beta (781 aa).

HEAT repeat units follow at residues 113-151 (PNLA…ASLY), 153-186 (IILH…EQGI), 187-224 (SIKD…QELQ), 294-332 (DHDL…PKTF), and 521-559 (PRIC…HDVD). 2 disordered regions span residues 694–713 (KPKR…TSSH) and 731–781 (ARQS…ETTE). The segment covering 699–712 (ASVSSVPSNTFTSS) has biased composition (polar residues). Residues 746 to 758 (STSEETDHTDDES) are compositionally biased toward acidic residues. Positions 759–774 (GSSSGDESTESSYVSS) are enriched in low complexity.

This sequence belongs to the adaptor complexes large subunit family. Adaptor protein complex 3 (AP-3) is a heterotetramer composed of 2 large adaptins (APL5 and APL6), a medium adaptin (APM3) and a small adaptin (APS3).

Its subcellular location is the golgi apparatus. The protein localises to the cytoplasmic vesicle. It is found in the clathrin-coated vesicle membrane. In terms of biological role, part of the AP-3 complex, an adaptor-related complex which is not clathrin-associated. The complex is associated with the Golgi region as well as more peripheral structures. It facilitates the budding of vesicles from the Golgi membrane and may be directly involved in trafficking to the vacuole. This Eremothecium gossypii (strain ATCC 10895 / CBS 109.51 / FGSC 9923 / NRRL Y-1056) (Yeast) protein is AP-3 complex subunit beta (APL6).